The chain runs to 801 residues: Transcription initiation factor TFIID subunit 5 (801 aa).

Residues 1 to 69 (MAALAEEQTE…GDGGTPKPGV (69 aa)) form a disordered region. Positions 30–51 (DGAGEGSGGTPNNGPNGGGGGN) are enriched in gly residues. The 33-residue stretch at 93-125 (HDRQTLLAVLQFLRQSNLREAEEALRREARLLE) folds into the LisH domain. Disordered regions lie at residues 156–176 (VPGS…SVFS) and 385–438 (VPLD…DSDK). Over residues 385 to 396 (VPLDDEDEEGEN) the composition is skewed to acidic residues. Over residues 408–419 (KDSIGSKSKKQD) the composition is skewed to basic and acidic residues. WD repeat units lie at residues 469–508 (NAYQ…LRSV), 542–581 (GHSG…CLVG), 584–625 (GHNY…RIFA), 626–667 (GHLA…RIFT), 668–707 (GHKG…MVGE), and 710–749 (GHTD…EDLE).

This sequence belongs to the WD repeat TAF5 family. As to quaternary structure, homodimer. Component of the TFIID basal transcription factor complex, composed of TATA-box-binding protein TBP, and a number of TBP-associated factors (TAFs), including TAF1, TAF2, TAF3, TAF4, TAF5, TAF6, TAF7, TAF8, TAF9, TAF10, TAF11, TAF12 and TAF13. The TFIID complex structure can be divided into 3 modules TFIID-A, TFIID-B, and TFIID-C. TAF5 forms the TFIID-A module together with TAF3 and TBP, and in TFIID-B with TAF8. Component of the TFTC-HAT complex, at least composed of TAF5L, TAF6L, TADA3L, SUPT3H/SPT3, TAF2, TAF4, TAF5, GCN5L2/GCN5, TAF10 and TRRAP. TBP is not part of the TFTC-HAT complex. Interacts strongly with the histone H4-related TAF6 and the histone H3-related TAF9, as well as a stable complex comprised of both TAF6 and TAF9. Apparently weaker interactions with TBP, TAF1, TAF11, and TAF12, but not TAF7, also have been observed.

It localises to the nucleus. In terms of biological role, the TFIID basal transcription factor complex plays a major role in the initiation of RNA polymerase II (Pol II)-dependent transcription. TFIID recognizes and binds promoters with or without a TATA box via its subunit TBP, a TATA-box-binding protein, and promotes assembly of the pre-initiation complex (PIC). The TFIID complex consists of TBP and TBP-associated factors (TAFs), including TAF1, TAF2, TAF3, TAF4, TAF5, TAF6, TAF7, TAF8, TAF9, TAF10, TAF11, TAF12 and TAF13. The TFIID complex structure can be divided into 3 modules TFIID-A, TFIID-B, and TFIID-C. TAF5 is involved in two modules of TFIID, in TFIID-A together with TAF3 and TBP, and in TFIID-B with TAF8. Involved in contacts between TFIID and TFIIF in the PIC. The polypeptide is Transcription initiation factor TFIID subunit 5 (Taf5) (Mus musculus (Mouse)).